A 107-amino-acid chain; its full sequence is Histone H4 (107 aa).

The span at 1-16 (MPGRGKGGKGGKGYGK) shows a compositional bias: gly residues. Residues 1–23 (MPGRGKGGKGGKGYGKVGAKRHA) are disordered. Residues 17–21 (VGAKR) mediate DNA binding.

The protein belongs to the histone H4 family. The nucleosome is a histone octamer containing two molecules each of H2A, H2B, H3 and H4 assembled in one H3-H4 heterotetramer and two H2A-H2B heterodimers. The octamer wraps approximately 147 bp of DNA.

The protein localises to the nucleus. It is found in the chromosome. Functionally, core component of nucleosome. Nucleosomes wrap and compact DNA into chromatin, limiting DNA accessibility to the cellular machineries which require DNA as a template. Histones thereby play a central role in transcription regulation, DNA repair, DNA replication and chromosomal stability. DNA accessibility is regulated via a complex set of post-translational modifications of histones, also called histone code, and nucleosome remodeling. The polypeptide is Histone H4 (Euplotes crassus).